A 108-amino-acid chain; its full sequence is Ig kappa chain V region K-25 (108 aa).

Residues alanine 1–cysteine 23 are framework-1. Positions glutamine 24–serine 34 are complementarity-determining-1. The interval tryptophan 35–tyrosine 49 is framework-2. A complementarity-determining-2 region spans residues lysine 50–serine 56. A framework-3 region spans residues glycine 57–cysteine 88. Residues glutamine 89–tyrosine 97 form a complementarity-determining-3 region. A framework-4 region spans residues phenylalanine 98–lysine 107.

The protein is Ig kappa chain V region K-25 of Oryctolagus cuniculus (Rabbit).